The following is a 287-amino-acid chain: F-actin-capping protein subunit beta (287 aa).

Residue Ser-2 is modified to N-acetylserine. 2 positions are modified to phosphoserine: Ser-85 and Ser-92.

It belongs to the F-actin-capping protein beta subunit family. As to quaternary structure, component of the F-actin capping complex, composed of a heterodimer of an alpha and a beta subunit. Interacts with BSP1 (via C-terminus); leading to recruitment of the F-actin capping complex to actin cortical patches and the acomyosin contractile ring.

It is found in the cytoplasm. It localises to the cytoskeleton. The protein localises to the actin patch. Its subcellular location is the bud. The protein resides in the bud tip. F-actin-capping proteins bind in a Ca(2+)-independent manner to the fast growing ends of actin filaments (barbed end) thereby blocking the exchange of subunits at these ends. Unlike other capping proteins (such as gelsolin and severin), these proteins do not sever actin filaments. The polypeptide is F-actin-capping protein subunit beta (CAP2) (Saccharomyces cerevisiae (strain ATCC 204508 / S288c) (Baker's yeast)).